A 310-amino-acid chain; its full sequence is Small ribosomal subunit biogenesis GTPase RsgA (310 aa).

Positions 77–236 (KNELKRPNIA…IADTPGFSKL (160 aa)) constitute a CP-type G domain. Residues 126–129 (SKID) and 179–187 (GQTGVGKST) each bind GTP. 4 residues coordinate Zn(2+): Cys260, Cys266, His268, and Cys274.

Belongs to the TRAFAC class YlqF/YawG GTPase family. RsgA subfamily. In terms of assembly, monomer. Associates with 30S ribosomal subunit, binds 16S rRNA. Requires Zn(2+) as cofactor.

It is found in the cytoplasm. In terms of biological role, one of several proteins that assist in the late maturation steps of the functional core of the 30S ribosomal subunit. Helps release RbfA from mature subunits. May play a role in the assembly of ribosomal proteins into the subunit. Circularly permuted GTPase that catalyzes slow GTP hydrolysis, GTPase activity is stimulated by the 30S ribosomal subunit. This Phytoplasma australiense protein is Small ribosomal subunit biogenesis GTPase RsgA.